Reading from the N-terminus, the 253-residue chain is Prolactin-7A2 (253 aa).

Residues 1-30 (MSFSFSQPCPSGALLLVVVSSLLLWENVAS) form the signal peptide. 3 N-linked (GlcNAc...) asparagine glycosylation sites follow: N36, N103, and N135. 2 cysteine pairs are disulfide-bonded: C101–C218 and C235–C244.

Belongs to the somatotropin/prolactin family. As to expression, expression restricted to the placental tissue. Expressed only in the spongiotrophoblasts.

It localises to the secreted. In Mus musculus (Mouse), this protein is Prolactin-7A2 (Prl7a2).